A 188-amino-acid polypeptide reads, in one-letter code: HGPRTase-like protein (188 aa).

This sequence belongs to the purine/pyrimidine phosphoribosyltransferase family. Archaeal HPRT subfamily.

In terms of biological role, may catalyze a purine salvage reaction, the substrate is unknown. The sequence is that of HGPRTase-like protein from Halobacterium salinarum (strain ATCC 29341 / DSM 671 / R1).